A 470-amino-acid chain; its full sequence is Siroheme synthase (470 aa).

Positions Met-1–Val-201 are precorrin-2 dehydrogenase /sirohydrochlorin ferrochelatase. NAD(+)-binding positions include Glu-22–Ile-23 and Cys-43–Glu-44. A Phosphoserine modification is found at Ser-128. The tract at residues Gly-213–Gly-470 is uroporphyrinogen-III C-methyltransferase. An S-adenosyl-L-methionine-binding site is contributed by Pro-222. Asp-245 acts as the Proton acceptor in catalysis. Lys-267 acts as the Proton donor in catalysis. Residues Gly-298 to Asp-300, Ile-303, Thr-328 to Ala-329, Met-379, and Gly-408 contribute to the S-adenosyl-L-methionine site.

It in the N-terminal section; belongs to the precorrin-2 dehydrogenase / sirohydrochlorin ferrochelatase family. In the C-terminal section; belongs to the precorrin methyltransferase family.

It carries out the reaction uroporphyrinogen III + 2 S-adenosyl-L-methionine = precorrin-2 + 2 S-adenosyl-L-homocysteine + H(+). The catalysed reaction is precorrin-2 + NAD(+) = sirohydrochlorin + NADH + 2 H(+). It catalyses the reaction siroheme + 2 H(+) = sirohydrochlorin + Fe(2+). The protein operates within cofactor biosynthesis; adenosylcobalamin biosynthesis; precorrin-2 from uroporphyrinogen III: step 1/1. Its pathway is cofactor biosynthesis; adenosylcobalamin biosynthesis; sirohydrochlorin from precorrin-2: step 1/1. It functions in the pathway porphyrin-containing compound metabolism; siroheme biosynthesis; precorrin-2 from uroporphyrinogen III: step 1/1. It participates in porphyrin-containing compound metabolism; siroheme biosynthesis; siroheme from sirohydrochlorin: step 1/1. The protein operates within porphyrin-containing compound metabolism; siroheme biosynthesis; sirohydrochlorin from precorrin-2: step 1/1. Its function is as follows. Multifunctional enzyme that catalyzes the SAM-dependent methylations of uroporphyrinogen III at position C-2 and C-7 to form precorrin-2 via precorrin-1. Then it catalyzes the NAD-dependent ring dehydrogenation of precorrin-2 to yield sirohydrochlorin. Finally, it catalyzes the ferrochelation of sirohydrochlorin to yield siroheme. This chain is Siroheme synthase, found in Yersinia pestis.